The sequence spans 199 residues: Chaperone protein TorD (199 aa).

This sequence belongs to the TorD/DmsD family. TorD subfamily.

The protein localises to the cytoplasm. In terms of biological role, involved in the biogenesis of TorA. Acts on TorA before the insertion of the molybdenum cofactor and, as a result, probably favors a conformation of the apoenzyme that is competent for acquiring the cofactor. In Escherichia coli O7:K1 (strain IAI39 / ExPEC), this protein is Chaperone protein TorD.